The primary structure comprises 260 residues: Cytosolic Fe-S cluster assembly factor Nubp2 homolog (260 aa).

14–21 (GKGGVGKS) is an ATP binding site. [4Fe-4S] cluster is bound by residues C188 and C191.

This sequence belongs to the Mrp/NBP35 ATP-binding proteins family. NUBP2/CFD1 subfamily. As to quaternary structure, heterotetramer of 2 Nubp1 and 2 Nubp2 chains. [4Fe-4S] cluster serves as cofactor.

It is found in the cytoplasm. Its function is as follows. Component of the cytosolic iron-sulfur (Fe/S) protein assembly (CIA) machinery. Required for maturation of extramitochondrial Fe-S proteins. The Nubp1-Nubp2 heterotetramer forms a Fe-S scaffold complex, mediating the de novo assembly of an Fe-S cluster and its transfer to target apoproteins. The chain is Cytosolic Fe-S cluster assembly factor Nubp2 homolog from Drosophila simulans (Fruit fly).